We begin with the raw amino-acid sequence, 786 residues long: Protein RDM16 (786 aa).

Basic and acidic residues-rich tracts occupy residues 1-80 (MDKE…SRDR), 87-112 (RSHEGSKEKESRSKRKDREEENGARD), and 123-143 (NGERRSRFEDVAIEVENKDAQ). Disordered stretches follow at residues 1–223 (MDKE…SANL), 255–283 (KKATKPTSEGSPHTRVPPSTTTPAVSTGT), 532–557 (RPIEPPAEAAPPPPQPLKLTKKEQKK), and 616–642 (EREQAHTDRNAARKLTPAEKREKKERK). Positions 145 to 164 (SEGSGATNPTSGVTMGASTY) are enriched in polar residues. Low complexity predominate over residues 165–176 (SSIPSEASAAPS). The span at 177 to 189 (QTLLTKVSSISTT) shows a compositional bias: polar residues. Positions 190-203 (DENKASVVRSHEVP) are enriched in basic and acidic residues. Positions 268-283 (TRVPPSTTTPAVSTGT) are enriched in low complexity. The span at 534–547 (IEPPAEAAPPPPQP) shows a compositional bias: pro residues.

The protein localises to the nucleus. It is found in the nucleoplasm. Functions in the RNA-directed DNA methylation (RdDM) pathway. Acts as a pre-mRNA splicing factor, likely by affecting Pol V transcripts. Affects DNA methylation of transposable elements (TEs) and preferentially influences NRPD1- and ROS1-targeted loci. The sequence is that of Protein RDM16 from Arabidopsis thaliana (Mouse-ear cress).